A 129-amino-acid chain; its full sequence is Small ribosomal subunit protein uS9 (129 aa).

Belongs to the universal ribosomal protein uS9 family.

The sequence is that of Small ribosomal subunit protein uS9 from Helicobacter pylori (strain Shi470).